Reading from the N-terminus, the 132-residue chain is ATP synthase epsilon chain (132 aa).

It belongs to the ATPase epsilon chain family. As to quaternary structure, F-type ATPases have 2 components, CF(1) - the catalytic core - and CF(0) - the membrane proton channel. CF(1) has five subunits: alpha(3), beta(3), gamma(1), delta(1), epsilon(1). CF(0) has three main subunits: a, b and c.

Its subcellular location is the cell membrane. In terms of biological role, produces ATP from ADP in the presence of a proton gradient across the membrane. The polypeptide is ATP synthase epsilon chain (Bacillus velezensis (strain DSM 23117 / BGSC 10A6 / LMG 26770 / FZB42) (Bacillus amyloliquefaciens subsp. plantarum)).